A 680-amino-acid polypeptide reads, in one-letter code: Translation factor GUF1 homolog, chloroplastic (680 aa).

Residues 1-51 (MAAKINSLAALVSLQASHHHHXSTPFYFSPFSPHLSTTLTSRRRSLRSAVV) constitute a chloroplast transit peptide. The region spanning 83-264 (SNIRNFCIIA…AIVKRIPPPC (182 aa)) is the tr-type G domain. Residues 92-99 (AHIDHGKS), 157-161 (DTPGH), and 211-214 (NKID) each bind GTP.

Belongs to the TRAFAC class translation factor GTPase superfamily. Classic translation factor GTPase family. LepA subfamily.

The protein resides in the plastid. It is found in the chloroplast. It carries out the reaction GTP + H2O = GDP + phosphate + H(+). Promotes chloroplast protein synthesis. May act as a fidelity factor of the translation reaction, by catalyzing a one-codon backward translocation of tRNAs on improperly translocated ribosomes. The protein is Translation factor GUF1 homolog, chloroplastic of Vitis vinifera (Grape).